The following is a 157-amino-acid chain: Isotocin-neurophysin IT 1 (157 aa).

The first 20 residues, 1-20 (MFGTSVSALCLLFLLSVCTA), serve as a signal peptide directing secretion. A disulfide bridge links Cys21 with Cys26. Position 29 is a glycine amide (Gly29). Disulfide bonds link Cys42/Cys86, Cys45/Cys59, Cys53/Cys76, Cys60/Cys66, Cys93/Cys106, Cys100/Cys118, and Cys107/Cys112.

It belongs to the vasopressin/oxytocin family. Seven disulfide bonds are present in neurophysin.

The protein localises to the secreted. In terms of biological role, isotocin causes contraction of smooth muscles. The sequence is that of Isotocin-neurophysin IT 1 from Oncorhynchus keta (Chum salmon).